Here is a 217-residue protein sequence, read N- to C-terminus: Phosphatidylserine decarboxylase proenzyme (217 aa).

Residue Ser182 is the Schiff-base intermediate with substrate; via pyruvic acid of the active site. The residue at position 182 (Ser182) is a Pyruvic acid (Ser); by autocatalysis.

It belongs to the phosphatidylserine decarboxylase family. PSD-A subfamily. As to quaternary structure, heterodimer of a large membrane-associated beta subunit and a small pyruvoyl-containing alpha subunit. It depends on pyruvate as a cofactor. Is synthesized initially as an inactive proenzyme. Formation of the active enzyme involves a self-maturation process in which the active site pyruvoyl group is generated from an internal serine residue via an autocatalytic post-translational modification. Two non-identical subunits are generated from the proenzyme in this reaction, and the pyruvate is formed at the N-terminus of the alpha chain, which is derived from the carboxyl end of the proenzyme. The post-translation cleavage follows an unusual pathway, termed non-hydrolytic serinolysis, in which the side chain hydroxyl group of the serine supplies its oxygen atom to form the C-terminus of the beta chain, while the remainder of the serine residue undergoes an oxidative deamination to produce ammonia and the pyruvoyl prosthetic group on the alpha chain.

The protein resides in the cell membrane. It carries out the reaction a 1,2-diacyl-sn-glycero-3-phospho-L-serine + H(+) = a 1,2-diacyl-sn-glycero-3-phosphoethanolamine + CO2. It participates in phospholipid metabolism; phosphatidylethanolamine biosynthesis; phosphatidylethanolamine from CDP-diacylglycerol: step 2/2. Its function is as follows. Catalyzes the formation of phosphatidylethanolamine (PtdEtn) from phosphatidylserine (PtdSer). The polypeptide is Phosphatidylserine decarboxylase proenzyme (Prosthecochloris aestuarii (strain DSM 271 / SK 413)).